Reading from the N-terminus, the 493-residue chain is Transcript termination protein OPG145 (493 aa).

The Helicase ATP-binding domain occupies 100–256; the sequence is MIKLKRPLYI…NSIINIAKLS (157 aa). 113–120 contributes to the ATP binding site; that stretch reads LACGFGKT. A DESH box motif is present at residues 206-209; it reads DESH.

The protein belongs to the helicase family. Poxviruses subfamily. As to quaternary structure, interacts with OPG087. Might be part of a transcription complex composed at least of OPG087, OPG110, and OPG145.

The protein resides in the virion. Functionally, DNA helicase which seems to act as a postreplicative transcription termination factor. Involved in ATP-dependent release of nascent RNA. Forms a stable complex with single-stranded DNA, and to a lesser extent RNA. This chain is Transcript termination protein OPG145 (OPG145), found in Variola virus (isolate Human/India/Ind3/1967) (VARV).